Here is a 202-residue protein sequence, read N- to C-terminus: Histone chaperone ASF1B (202 aa).

Positions 1 to 156 (MAKVSVLNVA…TRFHINWDNN (156 aa)) are interaction with histone H3 and CHAF1B. Serine 198 bears the Phosphoserine; by TLK2 mark.

Belongs to the ASF1 family. Interacts with histone H3 (via C-terminus), including histone H3.1, H3.2 and H3.3, and histone H4; the interaction with H3 is direct. Interacts with the CHAF1A, CHAF1B and RBBP4 subunits of the CAF-1 complex. Interacts with HAT1, NASP and TAF1. Found in a soluble complex with NASP and histones H3 and H4; the interaction with NASP is probably indirect and mediated by H3-H4. Interacts with CDAN1. Found in a cytosolic complex with CDAN1, ASF1A, IPO4 and histones H3.1 and H4. Interacts with CREBBP. In terms of processing, phosphorylated by TLK1 and TLK2.

The protein localises to the nucleus. Its subcellular location is the cytoplasm. It is found in the cytosol. Functionally, histone chaperone that facilitates histone deposition and histone exchange and removal during nucleosome assembly and disassembly. Cooperates with chromatin assembly factor 1 (CAF-1) to promote replication-dependent chromatin assembly. Also involved in the nuclear import of the histone H3-H4 dimer together with importin-4 (IPO4): specifically recognizes and binds newly synthesized histones with the monomethylation of H3 'Lys-9' (H3K9me1) and diacetylation at 'Lys-5' and 'Lys-12' of H4 (H4K5ac and H4K12ac) marks in the cytosol. Does not participate in replication-independent nucleosome deposition which is mediated by ASF1A and HIRA. Required for gonad development. The chain is Histone chaperone ASF1B (ASF1B) from Bos taurus (Bovine).